We begin with the raw amino-acid sequence, 206 residues long: dITP/XTP pyrophosphatase (206 aa).

7–12 (SRNPKK) provides a ligand contact to substrate. Residue Asp-72 is the Proton acceptor of the active site. Asp-72 serves as a coordination point for Mg(2+). Substrate contacts are provided by residues Ser-73, 155–158 (FGYD), Lys-178, and 183–184 (HR).

This sequence belongs to the HAM1 NTPase family. As to quaternary structure, homodimer. Mg(2+) serves as cofactor.

The enzyme catalyses XTP + H2O = XMP + diphosphate + H(+). It catalyses the reaction dITP + H2O = dIMP + diphosphate + H(+). The catalysed reaction is ITP + H2O = IMP + diphosphate + H(+). Functionally, pyrophosphatase that catalyzes the hydrolysis of nucleoside triphosphates to their monophosphate derivatives, with a high preference for the non-canonical purine nucleotides XTP (xanthosine triphosphate), dITP (deoxyinosine triphosphate) and ITP. Seems to function as a house-cleaning enzyme that removes non-canonical purine nucleotides from the nucleotide pool, thus preventing their incorporation into DNA/RNA and avoiding chromosomal lesions. In Mycobacteroides abscessus (strain ATCC 19977 / DSM 44196 / CCUG 20993 / CIP 104536 / JCM 13569 / NCTC 13031 / TMC 1543 / L948) (Mycobacterium abscessus), this protein is dITP/XTP pyrophosphatase.